Consider the following 459-residue polypeptide: Cysteine--tRNA ligase (459 aa).

A Zn(2+)-binding site is contributed by Cys-31. Residues 33–43 carry the 'HIGH' region motif; sequence PTVYYNPHIGN. Zn(2+)-binding residues include Cys-216, His-241, and Glu-245. The 'KMSKS' region motif lies at 274–278; that stretch reads KMSKS. Lys-277 provides a ligand contact to ATP.

The protein belongs to the class-I aminoacyl-tRNA synthetase family. In terms of assembly, monomer. It depends on Zn(2+) as a cofactor.

It is found in the cytoplasm. The enzyme catalyses tRNA(Cys) + L-cysteine + ATP = L-cysteinyl-tRNA(Cys) + AMP + diphosphate. The protein is Cysteine--tRNA ligase of Rickettsia conorii (strain ATCC VR-613 / Malish 7).